The sequence spans 217 residues: GrpE protein homolog 1, mitochondrial (217 aa).

A mitochondrion-targeting transit peptide spans 1–27 (MAARCVRLARRSLPALALSFRPSPRLL). Positions 37 to 56 (GQNLDEDLGHCEPKTDPPSA) are disordered. N6-acetyllysine; alternate is present on Lys94. Lys94 is subject to N6-succinyllysine; alternate. N6-acetyllysine is present on Lys100. Lys120 carries the post-translational modification N6-succinyllysine. Lys215 carries the N6-acetyllysine; alternate modification. Residue Lys215 is modified to N6-succinyllysine; alternate.

Belongs to the GrpE family. In terms of assembly, probable component of the PAM complex at least composed of a mitochondrial HSP70 protein, GRPEL1 or GRPEL2, TIMM44, TIMM16/PAM16 and TIMM14/DNAJC19. Binds to HSP70, HSC70 and HSJ1B.

It localises to the mitochondrion matrix. Its function is as follows. Essential component of the PAM complex, a complex required for the translocation of transit peptide-containing proteins from the inner membrane into the mitochondrial matrix in an ATP-dependent manner. Seems to control the nucleotide-dependent binding of mitochondrial HSP70 to substrate proteins. The polypeptide is GrpE protein homolog 1, mitochondrial (Grpel1) (Mus musculus (Mouse)).